The following is a 54-amino-acid chain: ComX pheromone (54 aa).

Positions 1 to 46 (MQEIVGYLVKNPEVLDEVMKGRASLLNIDKDQLKSIVDAFGGLQIY) are excised as a propeptide. The 3'-geranyl-2',N2-cyclotryptophan moiety is linked to residue W51.

In terms of assembly, interacts directly with the sensor histidine kinase ComP and stimulates its activity. In terms of processing, trp-51 is modified by isoprenylation, probably by geranylation, which is essential for activity. Modified by the tryptophan prenyltransferase ComQ before export to the extracellular environment. The type of isoprenyl derivative differs among the different pherotypes and depends on ComX primary sequence.

It is found in the secreted. In terms of biological role, part of a major quorum-sensing system that regulates the development of genetic competence. Acts through the activation of the two-component regulatory system ComP/ComA composed of a sensor histidine kinase, ComP, and a response regulator, ComA. The chain is ComX pheromone from Bacillus mojavensis.